The chain runs to 372 residues: Glutamate 5-kinase (372 aa).

An ATP-binding site is contributed by Lys-14. The substrate site is built by Ser-54, Asp-141, and Asn-153. ATP contacts are provided by residues 173-174 (TD) and 215-221 (TGGMATK). The PUA domain occupies 280-358 (RGKLILDQGA…DDIESLLGYD (79 aa)).

This sequence belongs to the glutamate 5-kinase family.

Its subcellular location is the cytoplasm. The enzyme catalyses L-glutamate + ATP = L-glutamyl 5-phosphate + ADP. The protein operates within amino-acid biosynthesis; L-proline biosynthesis; L-glutamate 5-semialdehyde from L-glutamate: step 1/2. Its function is as follows. Catalyzes the transfer of a phosphate group to glutamate to form L-glutamate 5-phosphate. The chain is Glutamate 5-kinase from Shewanella sediminis (strain HAW-EB3).